A 135-amino-acid polypeptide reads, in one-letter code: Transcription antitermination protein NusB (135 aa).

The protein belongs to the NusB family.

In terms of biological role, involved in transcription antitermination. Required for transcription of ribosomal RNA (rRNA) genes. Binds specifically to the boxA antiterminator sequence of the ribosomal RNA (rrn) operons. This is Transcription antitermination protein NusB from Lacticaseibacillus casei (strain BL23) (Lactobacillus casei).